Here is a 407-residue protein sequence, read N- to C-terminus: Na(+)-translocating NADH-quinone reductase subunit F (407 aa).

Residues 6-26 form a helical membrane-spanning segment; the sequence is IFLAIGMFTAIVLGLVAIILV. Positions 35–127 constitute a 2Fe-2S ferredoxin-type domain; the sequence is GDVTIQINGE…DMQIRVPEEV (93 aa). [2Fe-2S] cluster-binding residues include C70, C76, C79, and C111. The FAD-binding FR-type domain maps to 130-269; sequence VKKWECTVES…YGPFGEFFAK (140 aa).

It belongs to the NqrF family. In terms of assembly, composed of six subunits; NqrA, NqrB, NqrC, NqrD, NqrE and NqrF. Requires [2Fe-2S] cluster as cofactor. It depends on FAD as a cofactor.

It is found in the cell inner membrane. It catalyses the reaction a ubiquinone + n Na(+)(in) + NADH + H(+) = a ubiquinol + n Na(+)(out) + NAD(+). In terms of biological role, NQR complex catalyzes the reduction of ubiquinone-1 to ubiquinol by two successive reactions, coupled with the transport of Na(+) ions from the cytoplasm to the periplasm. The first step is catalyzed by NqrF, which accepts electrons from NADH and reduces ubiquinone-1 to ubisemiquinone by a one-electron transfer pathway. This Pseudomonas paraeruginosa (strain DSM 24068 / PA7) (Pseudomonas aeruginosa (strain PA7)) protein is Na(+)-translocating NADH-quinone reductase subunit F.